Reading from the N-terminus, the 307-residue chain is Thymidylate synthase (307 aa).

DUMP is bound at residue Arg44. Ser108 is modified (phosphoserine). Residues 169-170 (RR), 189-190 (CH), 209-212 (RSGD), Asn220, and 250-252 (HIY) each bind dUMP. The active-site Nucleophile is the Cys189. Residue Asp212 participates in (6R)-5,10-methylene-5,6,7,8-tetrahydrofolate binding. Residues Lys286 and Lys302 each participate in a glycyl lysine isopeptide (Lys-Gly) (interchain with G-Cter in SUMO2) cross-link. (6R)-5,10-methylene-5,6,7,8-tetrahydrofolate is bound at residue Ala306.

This sequence belongs to the thymidylate synthase family. In terms of assembly, homodimer.

It is found in the nucleus. Its subcellular location is the cytoplasm. The protein localises to the mitochondrion. It localises to the mitochondrion matrix. The protein resides in the mitochondrion inner membrane. The catalysed reaction is dUMP + (6R)-5,10-methylene-5,6,7,8-tetrahydrofolate = 7,8-dihydrofolate + dTMP. Its pathway is pyrimidine metabolism; dTTP biosynthesis. Functionally, catalyzes the reductive methylation of 2'-deoxyuridine 5'-monophosphate (dUMP) to thymidine 5'-monophosphate (dTMP), using the cosubstrate, 5,10- methylenetetrahydrofolate (CH2H4folate) as a 1-carbon donor and reductant and contributes to the de novo mitochondrial thymidylate biosynthesis pathway. The polypeptide is Thymidylate synthase (Tyms) (Mus musculus (Mouse)).